Reading from the N-terminus, the 461-residue chain is Protein DVR-1 homolog (461 aa).

The signal sequence occupies residues 1–30 (MEYSRKTYLDLNIMAKYILILSLFFGPGLS). A propeptide spanning residues 31–338 (WDVFYSGDED…QKKGGKRPRK (308 aa)) is cleaved from the precursor. The N-linked (GlcNAc...) asparagine glycan is linked to Asn149. Residues 317-351 (SHLRRNRRAATRQKKGGKRPRKPDTDNDIASRDSA) form a disordered region. Basic residues predominate over residues 318–337 (HLRRNRRAATRQKKGGKRPR). Basic and acidic residues predominate over residues 338–347 (KPDTDNDIAS). Cystine bridges form between Cys360–Cys426, Cys389–Cys458, and Cys393–Cys460. An N-linked (GlcNAc...) asparagine glycan is attached at Asn402.

This sequence belongs to the TGF-beta family. As to quaternary structure, homodimer; disulfide-linked.

The protein localises to the secreted. The sequence is that of Protein DVR-1 homolog (DVR1) from Strongylocentrotus purpuratus (Purple sea urchin).